The following is a 231-amino-acid chain: Eukaryotic translation initiation factor 4E allele A (231 aa).

Basic and acidic residues predominate over residues 1-20; the sequence is MAAAEMERTTSFDAAEKLKA. The interval 1–36 is disordered; it reads MAAAEMERTTSFDAAEKLKAADAGGGEVDDELEEGE. Residues 27-36 are compositionally biased toward acidic residues; it reads EVDDELEEGE. EIF4G-binding stretches follow at residues 56–59 and 66–102; these read HPLE and FDSP…NNIH. MRNA is bound by residues 74–79, lysine 106, and 124–125; these read RQTAWG and WE. The cysteines at positions 129 and 167 are disulfide-linked. An EIF4G-binding region spans residues 150-159; that stretch reads YTLLAMIGHQ. MRNA contacts are provided by residues 174–179 and 219–223; these read RSKGEK and KRLDR.

Belongs to the eukaryotic initiation factor 4E family. As to quaternary structure, EIF4F is a multi-subunit complex, the composition of which varies with external and internal environmental conditions. It is composed of at least EIF4A, EIF4E and EIF4G. EIF4E is also known to interact with other partners. In higher plants two isoforms of EIF4F have been identified, named isoform EIF4F and isoform EIF(iso)4F. Isoform EIF4F has subunits p220 and p26, whereas isoform EIF(iso)4F has subunits p82 and p28. In terms of assembly, (Microbial infection) Interacts with viral genome-linked protein (VPg); this interaction is possible in susceptible hosts but impaired in resistant plants. Post-translationally, according to the redox status, the Cys-129-Cys-167 disulfide bridge may have a role in regulating protein function by affecting its ability to bind capped mRNA.

It is found in the nucleus. Its subcellular location is the cytoplasm. Its function is as follows. Component of the protein complex eIF4F, which is involved in the recognition of the mRNA cap, ATP-dependent unwinding of 5'-terminal secondary structure and recruitment of mRNA to the ribosome. Recognizes and binds the 7-methylguanosine-containing mRNA cap during an early step in the initiation of protein synthesis and facilitates ribosome binding by inducing the unwinding of the mRNAs secondary structures. Key component of recessive resistance to potyviruses. Functionally, (Microbial infection) Susceptibility host factor required for viral infection (e.g. Potato virus Y (PVY)) by recruiting viral RNAs to the host ribosomal complex via an interaction with viral genome-linked protein (VPg). This chain is Eukaryotic translation initiation factor 4E allele A, found in Solanum tuberosum (Potato).